The primary structure comprises 435 residues: MFIDRAKIYVKAGDGGNGCVAFRREKFVPRGGPAGGDGGKGGDVIIEADENLDTLLDFHYKRHYYAERGEHGKGKNQKGKDGEDLIIKVPTGTLIFDAETGELIADLVSHGQRVVVARGGKGGRGNTHFATSTRQAPYFAEKGEKGEERWLYLELKLLADVGLVGLPNAGKSTLLSKISNANPEIAPYPFTTKTPNLGVVEREDITFTVADIPGLIEGAHENKGMGDEFLRHIERTLVLVFVIDAADLVTPPQKAYEILKKELYLYSPKLLEKPRIIAINKIDLPEAQERLPEIEKWLKNEGVPYVFISAKEGINIDKLLELMEKYVRERKESIPVVEVDKEIQETKEGRVETEEIPEVIREKDLWILKDKKTESLANKLDLYNPQAFSYFSNYIKRRGIIKLINRAKVKDGEKIKIGDYIFKYNAKTNSLEILE.

The Obg domain occupies 1–158 (MFIDRAKIYV…RWLYLELKLL (158 aa)). The region spanning 159-328 (ADVGLVGLPN…LLELMEKYVR (170 aa)) is the OBG-type G domain. Residues 165-172 (GLPNAGKS), 190-194 (FTTKT), 211-214 (DIPG), 280-283 (NKID), and 309-311 (SAK) contribute to the GTP site. Mg(2+)-binding residues include Ser172 and Thr192. One can recognise an OCT domain in the interval 343–426 (IQETKEGRVE…IGDYIFKYNA (84 aa)).

It belongs to the TRAFAC class OBG-HflX-like GTPase superfamily. OBG GTPase family. Monomer. The cofactor is Mg(2+).

The protein resides in the cytoplasm. An essential GTPase which binds GTP, GDP and possibly (p)ppGpp with moderate affinity, with high nucleotide exchange rates and a fairly low GTP hydrolysis rate. Plays a role in control of the cell cycle, stress response, ribosome biogenesis and in those bacteria that undergo differentiation, in morphogenesis control. This chain is GTPase Obg, found in Dictyoglomus thermophilum (strain ATCC 35947 / DSM 3960 / H-6-12).